The following is a 405-amino-acid chain: Argininosuccinate synthase (405 aa).

Residues 10–18 (AYSGGLDTS) and A37 each bind ATP. Residues Y88 and S93 each contribute to the L-citrulline site. G118 serves as a coordination point for ATP. L-aspartate-binding residues include T120, N124, and D125. L-citrulline is bound at residue N124. Residues R128, S179, S188, E264, and Y276 each contribute to the L-citrulline site.

This sequence belongs to the argininosuccinate synthase family. Type 1 subfamily. Homotetramer.

It is found in the cytoplasm. It catalyses the reaction L-citrulline + L-aspartate + ATP = 2-(N(omega)-L-arginino)succinate + AMP + diphosphate + H(+). The protein operates within amino-acid biosynthesis; L-arginine biosynthesis; L-arginine from L-ornithine and carbamoyl phosphate: step 2/3. In Pseudomonas fluorescens (strain SBW25), this protein is Argininosuccinate synthase.